The following is a 132-amino-acid chain: Small ribosomal subunit protein uS11 (132 aa).

Belongs to the universal ribosomal protein uS11 family. As to quaternary structure, part of the 30S ribosomal subunit. Interacts with proteins S7 and S18. Binds to IF-3.

Located on the platform of the 30S subunit, it bridges several disparate RNA helices of the 16S rRNA. Forms part of the Shine-Dalgarno cleft in the 70S ribosome. The protein is Small ribosomal subunit protein uS11 of Chlamydia trachomatis serovar L2 (strain ATCC VR-902B / DSM 19102 / 434/Bu).